Consider the following 403-residue polypeptide: Glyceraldehyde-3-phosphate dehydrogenase A, chloroplastic (403 aa).

Residues 1–66 (MASSMLSATT…GGPRRAPTEA (66 aa)) constitute a chloroplast transit peptide. Residues 77-78 (RI), Asp-102, and Arg-147 contribute to the NADP(+) site. D-glyceraldehyde 3-phosphate is bound by residues 219–221 (SCT), Thr-250, Arg-265, 278–279 (TG), and Arg-301. Cys-220 functions as the Nucleophile in the catalytic mechanism. Asn-383 lines the NADP(+) pocket.

This sequence belongs to the glyceraldehyde-3-phosphate dehydrogenase family. In terms of assembly, tetramer of either four A chains (GAPDH 2) or two A and two B chains (GAPDH 1).

The protein resides in the plastid. It localises to the chloroplast. It catalyses the reaction D-glyceraldehyde 3-phosphate + phosphate + NADP(+) = (2R)-3-phospho-glyceroyl phosphate + NADPH + H(+). It functions in the pathway carbohydrate biosynthesis; Calvin cycle. This is Glyceraldehyde-3-phosphate dehydrogenase A, chloroplastic (GAPA) from Zea mays (Maize).